Reading from the N-terminus, the 204-residue chain is Large ribosomal subunit protein eL15 (204 aa).

2 disordered regions span residues 71–91 (RKRP…GVNQ) and 159–182 (REMR…HYSQ). Basic residues predominate over residues 159 to 174 (REMRGKTSAGRKHRGL).

The protein belongs to the eukaryotic ribosomal protein eL15 family.

The polypeptide is Large ribosomal subunit protein eL15 (RPL15) (Faxonius limosus (Spinycheek crayfish)).